The chain runs to 273 residues: Homeobox protein ceh-43 (273 aa).

2 disordered regions span residues 47 to 79 and 153 to 204; these read NGAT…EEAF and RRSK…LVSS. The homeobox DNA-binding region spans 102–161; it reads MRKPRTIYNSSQLQMLQKKFQKTQYLALPDRAALAHELGLSQTQVKIWFQNRRSKQKKQK.

Belongs to the distal-less homeobox family. Predominantly expressed in the head hypdodermis, neuronal support cells and CAN neurons.

The protein localises to the nucleus. Functionally, probable transcription factor. Binds to the sequence motif 5'-ATAAT-3' in regulatory elements. Required for development of the anterior hypodermis during embryonic morphogenesis for cell adhesion; also affects embryonic and larval viability. Modulates and maintains dopaminergic neuron differentiation. May activate dopamine pathway genes in concert with ETS domain-containing protein ast-1, and homeobox proteins ceh-40 and ceh-20. The protein is Homeobox protein ceh-43 (ceh-43) of Caenorhabditis elegans.